Reading from the N-terminus, the 99-residue chain is Small ribosomal subunit protein bS6 (99 aa).

The protein belongs to the bacterial ribosomal protein bS6 family.

Functionally, binds together with bS18 to 16S ribosomal RNA. The polypeptide is Small ribosomal subunit protein bS6 (Lactiplantibacillus plantarum (strain ATCC BAA-793 / NCIMB 8826 / WCFS1) (Lactobacillus plantarum)).